Here is a 267-residue protein sequence, read N- to C-terminus: Ribosomal RNA small subunit methyltransferase A (267 aa).

Positions 18, 20, 45, 66, 91, and 112 each coordinate S-adenosyl-L-methionine.

The protein belongs to the class I-like SAM-binding methyltransferase superfamily. rRNA adenine N(6)-methyltransferase family. RsmA subfamily.

Its subcellular location is the cytoplasm. The enzyme catalyses adenosine(1518)/adenosine(1519) in 16S rRNA + 4 S-adenosyl-L-methionine = N(6)-dimethyladenosine(1518)/N(6)-dimethyladenosine(1519) in 16S rRNA + 4 S-adenosyl-L-homocysteine + 4 H(+). Functionally, specifically dimethylates two adjacent adenosines (A1518 and A1519) in the loop of a conserved hairpin near the 3'-end of 16S rRNA in the 30S particle. May play a critical role in biogenesis of 30S subunits. The protein is Ribosomal RNA small subunit methyltransferase A of Shewanella pealeana (strain ATCC 700345 / ANG-SQ1).